Consider the following 594-residue polypeptide: MQAQALDNVSKAAFSRREPRAVRTTLKVFPRKNWLDECMTELSPKTMHKRDLGCSGLYRISKVLITSASLEIKLANVINTLPALLPMRRGAIVVVGAEGEPETTATFGVEPPSSGARHIAAKAAIDRIVAKGAPLVVPDTCKSELFQDELQSIVSGTGQVTFIGVPMKADQETLGTLWIDRAKDGAATRTQFEEEVRFLSMVANLAARAVRLNGHESRDSRPIGEEGDRKISGGDKELPEPTRQRPTRIDWIVGESPALRQVVESVKVVAQTNSAVLLRGESGTGKEFFAKAIHELSPRRKKPFVKLNCAALSAGVLESELFGHEKGAFTGAISQRAGRFELADGGTLLLDEIGEISPAFQAKLLRVLQEGELERVGGTKTLKVDVRLICATNKDLETAVAEGEFRADLYYRINVVPLFLPPLRERNGDIPRLAKVFLDRFNRENNRNLEFTPAALEILSRCKFPGNVRELENCVRRTATLARSATIVPSDFSCQNDQCFSSMLGKTADRPLGSHSLNGLAMSKRLPVESPASLGYPAGPGGLTVAPHLSDRELLISAMEKAGWVQAKAARILGLTPRQVGYALRRHHIQVKKI.

Residues 69-210 (SLEIKLANVI…MVANLAARAV (142 aa)) form the GAF domain. Residues 213 to 243 (NGHESRDSRPIGEEGDRKISGGDKELPEPTR) are disordered. Positions 252-480 (IVGESPALRQ…LENCVRRTAT (229 aa)) constitute a Sigma-54 factor interaction domain. Residues 280 to 287 (GESGTGKE) and 343 to 352 (ADGGTLLLDE) each bind ATP. Residues 481-551 (LARSATIVPS…GLTVAPHLSD (71 aa)) are inter-domain linker. A divalent metal cation contacts are provided by Cys494 and Cys499. Positions 552–594 (RELLISAMEKAGWVQAKAARILGLTPRQVGYALRRHHIQVKKI) are C-terminal DNA-binding domain. The H-T-H motif DNA-binding region spans 566–585 (QAKAARILGLTPRQVGYALR).

Interacts with sigma-54.

Functionally, required for activation of most nif operons, which are directly involved in nitrogen fixation. This Sinorhizobium fredii (strain NBRC 101917 / NGR234) protein is Nif-specific regulatory protein (nifA).